A 1488-amino-acid chain; its full sequence is Chromosome partition protein MukB (1488 aa).

An ATP-binding site is contributed by 34–41 (GGNGAGKS). 3 coiled-coil regions span residues 326 to 418 (LEAD…QYNQ), 444 to 472 (LDTF…QTAH), and 509 to 602 (RHLA…QRAP). Positions 666-783 (PGGAEDQRLN…SLPIFGRAAR (118 aa)) are flexible hinge. 3 coiled-coil regions span residues 835–923 (EAEI…AKLE), 977–1116 (EMLS…AKAG), and 1209–1265 (VEAI…LQSV). A disordered region spans residues 1049-1074 (ADSGAEERARQRRDELHAQLSNNRSR). The span at 1051–1065 (SGAEERARQRRDELH) shows a compositional bias: basic and acidic residues.

This sequence belongs to the SMC family. MukB subfamily. In terms of assembly, homodimerization via its hinge domain. Binds to DNA via its C-terminal region. Interacts, and probably forms a ternary complex, with MukE and MukF via its C-terminal region. The complex formation is stimulated by calcium or magnesium. Interacts with tubulin-related protein FtsZ.

The protein localises to the cytoplasm. It localises to the nucleoid. Plays a central role in chromosome condensation, segregation and cell cycle progression. Functions as a homodimer, which is essential for chromosome partition. Involved in negative DNA supercoiling in vivo, and by this means organize and compact chromosomes. May achieve or facilitate chromosome segregation by condensation DNA from both sides of a centrally located replisome during cell division. The protein is Chromosome partition protein MukB of Salmonella enteritidis PT4 (strain P125109).